Here is an 805-residue protein sequence, read N- to C-terminus: Translation initiation factor IF-2 (805 aa).

Disordered stretches follow at residues 68-89 (VVTE…EKKE) and 141-215 (KEKE…KEKK). Over residues 79–89 (VEEKKEEEKKE) the composition is skewed to basic and acidic residues. One can recognise a tr-type G domain in the interval 306–474 (PRPPIVVVMG…MILLLADILE (169 aa)). Residues 315-322 (GHVDHGKT) are G1. A GTP-binding site is contributed by 315 to 322 (GHVDHGKT). Residues 340 to 344 (GITQH) are G2. Residues 362 to 365 (DTPG) are G3. GTP-binding positions include 362-366 (DTPGH) and 416-419 (NKID). Positions 416–419 (NKID) are G4. The G5 stretch occupies residues 452–454 (SAK).

This sequence belongs to the TRAFAC class translation factor GTPase superfamily. Classic translation factor GTPase family. IF-2 subfamily.

It is found in the cytoplasm. One of the essential components for the initiation of protein synthesis. Protects formylmethionyl-tRNA from spontaneous hydrolysis and promotes its binding to the 30S ribosomal subunits. Also involved in the hydrolysis of GTP during the formation of the 70S ribosomal complex. In Aquifex aeolicus (strain VF5), this protein is Translation initiation factor IF-2 (infB).